A 373-amino-acid chain; its full sequence is Probable di-N-acetylchitobiase 1 (373 aa).

The signal sequence occupies residues 1-20; sequence MKIFIIISLILTILIIQSKS. The 349-residue stretch at 21–369 folds into the GH18 domain; sequence KECPCSNVEL…SGMWGALNSF (349 aa). Residue N48 is glycosylated (N-linked (GlcNAc...) asparagine). Residues 53–54 and 82–85 each bind chitin; these read PY and NGVR. N-linked (GlcNAc...) asparagine glycosylation occurs at N99. E127 functions as the Proton donor in the catalytic mechanism. Residues Y128 and 191–194 each bind chitin; that span reads MDYD. N-linked (GlcNAc...) asparagine glycosylation is found at N222, N250, N269, N279, and N288. Residue W347 participates in chitin binding.

The protein belongs to the glycosyl hydrolase 18 family.

The protein localises to the lysosome. Functionally, involved in the degradation of asparagine-linked glycoproteins. May hydrolyze of N-acetyl-beta-D-glucosamine (1-4)N-acetylglucosamine chitobiose core from the reducing end of the bond. This is Probable di-N-acetylchitobiase 1 (ctbs1) from Dictyostelium discoideum (Social amoeba).